The following is a 299-amino-acid chain: ATP phosphoribosyltransferase (299 aa).

Belongs to the ATP phosphoribosyltransferase family. Long subfamily. Equilibrium between an active dimeric form, an inactive hexameric form and higher aggregates. Interconversion between the various forms is largely reversible and is influenced by the natural substrates and inhibitors of the enzyme. Mg(2+) serves as cofactor.

The protein resides in the cytoplasm. The enzyme catalyses 1-(5-phospho-beta-D-ribosyl)-ATP + diphosphate = 5-phospho-alpha-D-ribose 1-diphosphate + ATP. It functions in the pathway amino-acid biosynthesis; L-histidine biosynthesis; L-histidine from 5-phospho-alpha-D-ribose 1-diphosphate: step 1/9. Feedback inhibited by histidine. Functionally, catalyzes the condensation of ATP and 5-phosphoribose 1-diphosphate to form N'-(5'-phosphoribosyl)-ATP (PR-ATP). Has a crucial role in the pathway because the rate of histidine biosynthesis seems to be controlled primarily by regulation of HisG enzymatic activity. The protein is ATP phosphoribosyltransferase of Shigella flexneri serotype 5b (strain 8401).